A 304-amino-acid polypeptide reads, in one-letter code: Mas-related G-protein coupled receptor member A1 (304 aa).

Topologically, residues 1-17 are extracellular; sequence MDNTIPGGINITILIPN. An N-linked (GlcNAc...) asparagine glycan is attached at Asn-10. Residues 18–38 form a helical membrane-spanning segment; sequence LMIIIFGLVGLTGNGIVFWLL. Topologically, residues 39–53 are cytoplasmic; the sequence is GFCLHRNAFSVYILN. Residues 54–74 form a helical membrane-spanning segment; sequence LALADFFFLLGHIIDSILLLL. Asn-75 is a topological domain (extracellular). Residues 76 to 96 form a helical membrane-spanning segment; the sequence is VFYPITFLLCFYTIMMVLYIA. At 97-131 the chain is on the cytoplasmic side; the sequence is GLSMLSAISTERCLSVLCPIWYHCHRPEHTSTVMC. Residues 132–152 traverse the membrane as a helical segment; that stretch reads AVIWVLSLLICILNSYFCGFL. The Extracellular portion of the chain corresponds to 153–166; the sequence is NTQYKNENGCLALN. A helical membrane pass occupies residues 167 to 187; the sequence is FFTAAYLMFLFVVLCLSSLAL. The Cytoplasmic portion of the chain corresponds to 188–206; sequence VARLFCGTGQIKLTRLYVT. A helical transmembrane segment spans residues 207–227; the sequence is IILSILVFLLCGLPFGIHWFL. The Extracellular portion of the chain corresponds to 228-243; sequence LFKIKDDFHVFDLGFY. Residues 244–264 traverse the membrane as a helical segment; that stretch reads LASVVLTAINSCANPIIYFFV. Residues 265 to 304 are Cytoplasmic-facing; that stretch reads GSFRHRLKHQTLKMVLQNALQDTPETAKIMVEMSRSKSEP.

The protein belongs to the G-protein coupled receptor 1 family. Mas subfamily. In terms of tissue distribution, expressed in a subset of sensory neurons that includes nociceptors. Expressed in the subclass of non-peptidergic sensory neurons that are IB4(+) and VR1(-).

It localises to the cell membrane. Its function is as follows. Orphan receptor activated by a subset of RFamide-family neuropeptides such as FLRF-amide and FMRF-amide. Mediates its action by association with G proteins that activate a phosphatidylinositol-calcium second messenger system. Its effect is mediated by G(q) and G(11) proteins. May regulate the function of nociceptive neurons by modulation of pain perception. This is Mas-related G-protein coupled receptor member A1 (Mrgpra1) from Mus musculus (Mouse).